Here is a 71-residue protein sequence, read N- to C-terminus: Gas vesicle protein A (71 aa).

The tract at residues 12–22 is alpha helix 1; that stretch reads LAEVIDRILDK. Residues 26-34 form a beta-strand 1 region; the sequence is IDAWARVSL. Residues 35–37 form a beta turn region; that stretch reads VGI. Residues 38–46 are beta-strand 2; that stretch reads ELLAIEARV. An alpha helix 2 region spans residues 51 to 70; that stretch reads VETYLKYAEAVGLTQXAXXA.

It belongs to the gas vesicle GvpA family. The gas vesicle shell is 2 nm thick and consists of a single layer of this protein. It forms helical ribs nearly perpendicular to the long axis of the vesicle.

The protein localises to the gas vesicle shell. Its function is as follows. Gas vesicles are hollow, gas filled proteinaceous nanostructures found in some microorganisms. During planktonic growth they allow positioning of the organism at a favorable depth for light or nutrient acquisition. GvpA forms the protein shell. The sequence is that of Gas vesicle protein A from Microcystis sp. (strain BC 84/1).